Reading from the N-terminus, the 82-residue chain is Diphthamide biosynthesis protein 3 (82 aa).

One can recognise a DPH-type MB domain in the interval 8–64 (IYDEVEIEDMTYDPALQTYSYPCPCGDKFEIALADLQDGQDIAVCPSCSLMVRVIFE). Positions 30, 32, 52, and 55 each coordinate Fe cation.

It belongs to the DPH3 family. As to quaternary structure, component of the 2-(3-amino-3-carboxypropyl)histidine synthase complex composed of dph-1, dph-2, dph-3 and a NADH-dependent reductase, predominantly cbr-1. Fe(2+) is required as a cofactor.

Its subcellular location is the cytoplasm. The protein resides in the nucleus. It carries out the reaction [3Fe-4S](1+)-[protein] + Fe(2+)-[Dph3] = [3Fe-4S](0)-[protein] + Fe(3+)-[Dph3]. The catalysed reaction is 2 [3Fe-4S](0)-[protein] + 2 Fe(2+)-[Dph3] + NADH = 2 [4Fe-4S](1+)-[protein] + 2 [Dph3] + NAD(+) + H(+). It participates in protein modification; peptidyl-diphthamide biosynthesis. In terms of biological role, required for the first step of diphthamide biosynthesis, a post-translational modification of histidine which occurs in elongation factor 2. Dph-1 and dph-2 transfer a 3-amino-3-carboxypropyl (ACP) group from S-adenosyl-L-methionine (SAM) to a histidine residue, the reaction is assisted by a reduction system comprising dph-3 and a NADH-dependent reductase, predominantly cbr-1. Acts as an electron donor to reduce the Fe-S cluster in dph1-dph2 keeping the [4Fe-4S] clusters in the active and reduced state. Restores iron to dph-1-dph-2 iron-sulfur clusters which have degraded from [4Fe-4S] to [3Fe-4S] by donating an iron atom to reform [4Fe-4S] clusters, in a manner dependent on the presence of elongation factor 2 and SAM. Associates with the elongator complex and is required for tRNA Wobble base modifications mediated by the elongator complex. The elongator complex is required for multiple tRNA modifications, including mcm5U (5-methoxycarbonylmethyl uridine), mcm5s 2U (5-methoxycarbonylmethyl-2-thiouridine), and ncm5U (5-carbamoylmethyl uridine). The sequence is that of Diphthamide biosynthesis protein 3 (dph-3) from Neurospora crassa (strain ATCC 24698 / 74-OR23-1A / CBS 708.71 / DSM 1257 / FGSC 987).